The following is a 318-amino-acid chain: sn-1 stearoyl-lipid 9-desaturase (318 aa).

The next 2 helical transmembrane spans lie at 56–76 and 80–100; these read VIFFFTSIHLVALLAFLPQFF and AVGMAFLLYVITGGIGITLGF. Positions 101-106 match the Histidine box-1 motif; sequence HRCISH. Residues 117–137 form a helical membrane-spanning segment; sequence YIFVICGTLACQGGVFEWVGL. The Histidine box-2 signature appears at 138–142; it reads HRMHH. A helical membrane pass occupies residues 201 to 221; the sequence is VALGLILFALGGWPFVIWGIF. The short motif at 271-275 is the Histidine box-3 element; it reads HHAYQ.

Belongs to the fatty acid desaturase type 2 family. Requires Fe(2+) as cofactor.

The protein resides in the cellular thylakoid membrane. It carries out the reaction a 1-octadecanoyl 2-acyl-glycerolipid + 2 reduced [2Fe-2S]-[ferredoxin] + O2 + 2 H(+) = a 1-[(9Z)-octadecenoyl]-2-acyl-glycerolipid + 2 oxidized [2Fe-2S]-[ferredoxin] + 2 H2O. The protein operates within lipid metabolism; polyunsaturated fatty acid biosynthesis. In terms of biological role, desaturase involved in fatty acid biosynthesis. Introduces a double bond at carbon 9 of stearoyl groups (18:0) attached to the sn-1 position of the glycerol moiety of membrane glycerolipids. Does not desaturate palmitic acid (16:0), palmitoleic acid (16:1) and cis-vaccenic acid (18:1). This chain is sn-1 stearoyl-lipid 9-desaturase, found in Synechocystis sp. (strain ATCC 27184 / PCC 6803 / Kazusa).